We begin with the raw amino-acid sequence, 164 residues long: Hoefavidin (164 aa).

The first 22 residues, 1–22 (MNKVLAIVLTITVAGFAQTAFA), serve as a signal peptide directing secretion. Residues 32–155 (KLLAGASNWV…GQDDFMQSVA (124 aa)) form the Avidin-like domain. The biotin site is built by N42, S46, Y68, N70, and G76. C77 and C108 are disulfide-bonded. Biotin contacts are provided by S110, T112, and D148.

The protein belongs to the avidin/streptavidin family. In terms of assembly, exhibits a dynamic oligomeric assembly: the apo form exits as homooctamers, which dissociate into homodimers upon biotin binding. The X-ray structure of the intact hoefavidin reveals unique crystal packing generated by an octameric cylindrical structure wherein the C-terminal segments of each monomer are introduced into the entrance of the biotin-binding site of an adjacent non-canonical monomer.

It is found in the secreted. Its function is as follows. The exact role played by hoefavidin in the host organism is still obscure. Forms a strong non-covalent complex with biotin and 2-iminobiotin. The chain is Hoefavidin from Hoeflea phototrophica (strain DSM 17068 / NCIMB 14078 / DFL-43).